A 323-amino-acid polypeptide reads, in one-letter code: 4-hydroxyphenylpyruvate 3-dimethylallyltransferase (323 aa).

Substrate is bound by residues Arg-160 and Glu-281.

Belongs to the aromatic prenyltransferase family. In terms of assembly, monomer.

The protein resides in the cytoplasm. The catalysed reaction is 3-(4-hydroxyphenyl)pyruvate + dimethylallyl diphosphate = 3-dimethylallyl-4-hydroxyphenylpyruvate + diphosphate. Its pathway is antibiotic biosynthesis; novobiocin biosynthesis. In terms of biological role, magnesium-independent aromatic prenyltransferase that catalyzes the irreversible transfer of a dimethylallyl group to 4-hydroxyphenylpyruvate to produce the ring A structure in the novobiocin biosynthesis pathway. Novobiocin is an aminocoumarin family antibiotic that targets bacterial DNA gyrases. It is able to prenylate many different compounds, including the phenylpropanoids 4-coumarate and caffeate, the plant polyketide resveratrol, the (iso)flavonoid naringenin, apigenin, daidzein and genistein, and the dihydroxynaphthalenes 1,6-DHN and 2,7-DHN. In Streptomyces niveus (Streptomyces spheroides), this protein is 4-hydroxyphenylpyruvate 3-dimethylallyltransferase.